We begin with the raw amino-acid sequence, 540 residues long: Chaperonin GroEL (540 aa).

ATP is bound by residues 29 to 32 (TLGP), 86 to 90 (DGTTT), Gly-413, 478 to 480 (DAL), and Asp-494.

This sequence belongs to the chaperonin (HSP60) family. As to quaternary structure, forms a cylinder of 14 subunits composed of two heptameric rings stacked back-to-back. Interacts with the co-chaperonin GroES.

The protein localises to the cytoplasm. It catalyses the reaction ATP + H2O + a folded polypeptide = ADP + phosphate + an unfolded polypeptide.. Together with its co-chaperonin GroES, plays an essential role in assisting protein folding. The GroEL-GroES system forms a nano-cage that allows encapsulation of the non-native substrate proteins and provides a physical environment optimized to promote and accelerate protein folding. This Clostridioides difficile (Peptoclostridium difficile) protein is Chaperonin GroEL.